A 434-amino-acid polypeptide reads, in one-letter code: UPF0597 protein CLB_1949 (434 aa).

This sequence belongs to the UPF0597 family.

This chain is UPF0597 protein CLB_1949, found in Clostridium botulinum (strain ATCC 19397 / Type A).